The sequence spans 376 residues: N-acetyldiaminopimelate deacetylase (376 aa).

Aspartate 70 is a catalytic residue. Glutamate 129 functions as the Proton acceptor in the catalytic mechanism.

It belongs to the peptidase M20A family. N-acetyldiaminopimelate deacetylase subfamily.

It catalyses the reaction N-acetyl-(2S,6S)-2,6-diaminopimelate + H2O = (2S,6S)-2,6-diaminopimelate + acetate. Its pathway is amino-acid biosynthesis; L-lysine biosynthesis via DAP pathway; LL-2,6-diaminopimelate from (S)-tetrahydrodipicolinate (acetylase route): step 3/3. Its function is as follows. Catalyzes the conversion of N-acetyl-diaminopimelate to diaminopimelate and acetate. In Geobacillus sp. (strain WCH70), this protein is N-acetyldiaminopimelate deacetylase.